The sequence spans 487 residues: H/ACA ribonucleoprotein complex subunit cbf5 (487 aa).

Residue aspartate 101 is the Nucleophile of the active site. A PUA domain is found at 273–348 (YKRIVVKDSA…VVAKVKRCIM (76 aa)). Over residues 400-410 (EEASAHAASES) the composition is skewed to low complexity. The disordered stretch occupies residues 400–487 (EEASAHAASE…QEKEDSDDSD (88 aa)). A compositionally biased stretch (basic and acidic residues) spans 435–459 (MDVDETKEEKKRKRHEGETAEERAE). A compositionally biased stretch (basic residues) spans 460–477 (RKRKKKEKKEKKERRKSK).

This sequence belongs to the pseudouridine synthase TruB family. As to quaternary structure, component of the small nucleolar ribonucleoprotein particles containing H/ACA-type snoRNAs (H/ACA snoRNPs).

It localises to the nucleus. The protein resides in the nucleolus. The catalysed reaction is uridine in 5S rRNA = pseudouridine in 5S rRNA. The enzyme catalyses uridine in snRNA = pseudouridine in snRNA. It catalyses the reaction a uridine in mRNA = a pseudouridine in mRNA. Its function is as follows. Catalytic subunit of H/ACA small nucleolar ribonucleoprotein (H/ACA snoRNP) complex, which catalyzes pseudouridylation of rRNA. This involves the isomerization of uridine such that the ribose is subsequently attached to C5, instead of the normal N1. Pseudouridine ('psi') residues may serve to stabilize the conformation of rRNAs and play a central role in ribosomal RNA processing. The H/ACA snoRNP complex also mediates pseudouridylation of other types of RNAs. Catalyzes pseudouridylation at position 93 in U2 snRNA. Also catalyzes pseudouridylation of mRNAs; H/ACA-type snoRNAs probably guide pseudouridylation of mRNAs. The protein is H/ACA ribonucleoprotein complex subunit cbf5 (cbf5) of Aspergillus fumigatus (strain ATCC MYA-4609 / CBS 101355 / FGSC A1100 / Af293) (Neosartorya fumigata).